We begin with the raw amino-acid sequence, 269 residues long: Seven in absentia homolog 3 (269 aa).

An SIAH-type; degenerate zinc finger spans residues 61–132 (GSFHPHHLSH…VVPHLRQIHR (72 aa)). 4 residues coordinate Zn(2+): C107, C114, H126, and H131.

Belongs to the SINA (Seven in absentia) family.

The protein localises to the mitochondrion. Functionally, negative regulator of PRKN translocation to damaged mitochondria. Acts probably by destabilizing PINK1 protein, hence inhibiting PRKN targeting to dysfunctional depolarized mitochondria. The chain is Seven in absentia homolog 3 (SIAH3) from Homo sapiens (Human).